A 244-amino-acid polypeptide reads, in one-letter code: NAD-dependent protein deacetylase (244 aa).

One can recognise a Deacetylase sirtuin-type domain in the interval 1-244; that stretch reads MSATERQLQY…IGDTCRQLRA (244 aa). NAD(+)-binding residues include A27, T31, F38, R39, Q107, I109, D110, and H125. Residue F38 coordinates nicotinamide. I109 and D110 together coordinate nicotinamide. The active-site Proton acceptor is H125. C133, C136, C153, and C156 together coordinate Zn(2+). NAD(+)-binding residues include S192, S193, N217, and I235.

The protein belongs to the sirtuin family. Class U subfamily. Requires Zn(2+) as cofactor.

It localises to the cytoplasm. The catalysed reaction is N(6)-acetyl-L-lysyl-[protein] + NAD(+) + H2O = 2''-O-acetyl-ADP-D-ribose + nicotinamide + L-lysyl-[protein]. Its function is as follows. NAD-dependent protein deacetylase which modulates the activities of several enzymes which are inactive in their acetylated form. This is NAD-dependent protein deacetylase from Chromobacterium violaceum (strain ATCC 12472 / DSM 30191 / JCM 1249 / CCUG 213 / NBRC 12614 / NCIMB 9131 / NCTC 9757 / MK).